A 341-amino-acid chain; its full sequence is UDP-3-O-acylglucosamine N-acyltransferase (341 aa).

His-242 serves as the catalytic Proton acceptor.

It belongs to the transferase hexapeptide repeat family. LpxD subfamily. Homotrimer.

The catalysed reaction is a UDP-3-O-[(3R)-3-hydroxyacyl]-alpha-D-glucosamine + a (3R)-hydroxyacyl-[ACP] = a UDP-2-N,3-O-bis[(3R)-3-hydroxyacyl]-alpha-D-glucosamine + holo-[ACP] + H(+). It functions in the pathway bacterial outer membrane biogenesis; LPS lipid A biosynthesis. Catalyzes the N-acylation of UDP-3-O-acylglucosamine using 3-hydroxyacyl-ACP as the acyl donor. Is involved in the biosynthesis of lipid A, a phosphorylated glycolipid that anchors the lipopolysaccharide to the outer membrane of the cell. The sequence is that of UDP-3-O-acylglucosamine N-acyltransferase from Haemophilus influenzae (strain ATCC 51907 / DSM 11121 / KW20 / Rd).